The primary structure comprises 668 residues: MNQTIKAKLELLPDSPGCYLHKDKNGTVIYVGKAKNLKNRVRSYFHGSHNTKTELLVSEIEDLEWIVVGSNIESLVLEINLIQRYKPKYNIMLKDDKYYPFLKITNEKYPRLLVVRKVQKDGATYFGPYPDVKAANEVKRLLDRIFPFRKCGLHEKKVCFYFHIHQCLCPVVNHVDPQVFKDMTQEVKEFLTGSDKKIVNELEAKMMVSSDNMEFEQAAEYRDVIKAIGTLRTKQRVMNQDLKDRDVFGYYVDKGWMCVQVFFVRQGKLIQRDVNMFPYYNDAEEDFLTYIGQFYQDNNHMMPREIFIPQDIDKESVEAVVAASQEGNLLTKAQAKEVDAKVFTAKTLKFSDQKDVEQSIVKLDKELSAEKRLSSLLAKTQIVQPSRGEKKQLVNMATKNAQSQLQLKFDVAERDILKTTKAVENLGKILGIPKPVRIESFDNSNIMGTSPVSAMVVFIDGKPSKKDYRKYKIKTVVGADDYASMREVMTRRYSRALKEETALPDLIAMDGGAGQVNITKQVLKELGLSIPVAGMQKNDKHQTSELLFGDPLDVVPLSRQSQEFFLLTRIQDEVHRFAITFHRQLRGKNTFSSKLDGIVGLGPKRKQKLLTTFKNLKAIEEASVQEVAEADIPYEVAERVKTTLSGPIQENENWESLKDNVPLLEGKK.

Positions D14–I91 constitute a GIY-YIG domain. The UVR domain maps to K196–L231.

Belongs to the UvrC family. Interacts with UvrB in an incision complex.

It localises to the cytoplasm. In terms of biological role, the UvrABC repair system catalyzes the recognition and processing of DNA lesions. UvrC both incises the 5' and 3' sides of the lesion. The N-terminal half is responsible for the 3' incision and the C-terminal half is responsible for the 5' incision. The chain is UvrABC system protein C from Lactococcus lactis subsp. lactis (strain IL1403) (Streptococcus lactis).